Reading from the N-terminus, the 252-residue chain is C-type lectin domain family 2 member D3 (252 aa).

Residues 1–58 are disordered; that stretch reads MSSSAHLQDAPPLLSGTLTQNEGQTSLRQSSSCGPSAASASESLSGYTESRIPHSKVR. Residues 1-78 lie on the Cytoplasmic side of the membrane; the sequence is MSSSAHLQDA…ESRVKRYCCY (78 aa). Positions 16 to 29 are enriched in polar residues; it reads GTLTQNEGQTSLRQ. Over residues 30-43 the composition is skewed to low complexity; that stretch reads SSSCGPSAASASES. The chain crosses the membrane as a helical; Signal-anchor for type II membrane protein span at residues 79-99; that stretch reads GGVITVVAIAIVVPLSVTLSV. Residues 100–252 are Extracellular-facing; it reads KQMEQTSINN…KPKKYISQSQ (153 aa). The region spanning 137–242 is the C-type lectin domain; the sequence is YGNKCFYFSE…VYVERPWICS (106 aa). A glycan (N-linked (GlcNAc...) asparagine) is linked at asparagine 150. Cysteine 158 and cysteine 241 form a disulfide bridge.

Its subcellular location is the cell membrane. In terms of biological role, lectin-type cell surface receptor. The polypeptide is C-type lectin domain family 2 member D3 (Clec2d3) (Rattus norvegicus (Rat)).